The chain runs to 399 residues: Elongation factor Tu (399 aa).

One can recognise a tr-type G domain in the interval 10 to 209 (KPHVNIGTIG…EVDRYIPTPE (200 aa)). Residues 19-26 (GHVDHGKT) are G1. GTP is bound at residue 19–26 (GHVDHGKT). A Mg(2+)-binding site is contributed by Thr-26. The interval 60–64 (GITIA) is G2. The segment at 81–84 (DCPG) is G3. Residues 81-85 (DCPGH) and 136-139 (NKED) each bind GTP. A G4 region spans residues 136–139 (NKED). The segment at 174–176 (SAL) is G5.

Belongs to the TRAFAC class translation factor GTPase superfamily. Classic translation factor GTPase family. EF-Tu/EF-1A subfamily. As to quaternary structure, monomer.

Its subcellular location is the cytoplasm. The catalysed reaction is GTP + H2O = GDP + phosphate + H(+). In terms of biological role, GTP hydrolase that promotes the GTP-dependent binding of aminoacyl-tRNA to the A-site of ribosomes during protein biosynthesis. This Wolinella succinogenes (strain ATCC 29543 / DSM 1740 / CCUG 13145 / JCM 31913 / LMG 7466 / NCTC 11488 / FDC 602W) (Vibrio succinogenes) protein is Elongation factor Tu.